A 124-amino-acid chain; its full sequence is Bactoprenol-linked glucose translocase (124 aa).

Helical transmembrane passes span 12–32 (FFSY…VFYA), 45–65 (NIVG…RCSF), 75–95 (FIFI…FDLL), and 96–116 (ALSP…LGYC).

This sequence belongs to the GtrA family.

The protein localises to the cell membrane. It participates in bacterial outer membrane biogenesis; lipopolysaccharide biosynthesis. Its function is as follows. Involved in O antigen modification. Involved in the translocation of bactoprenol-linked glucose across the cytoplasmic membrane. The sequence is that of Bactoprenol-linked glucose translocase (rfbI) from Shigella flexneri.